The following is an 88-amino-acid chain: SPbeta prophage-derived protein BhlB (88 aa).

The next 2 helical transmembrane spans lie at 15-35 (LLAIALLNQIMVMLGKAAFII) and 45-65 (DCLYTIFTIVFTTSTTTAAWF).

It belongs to the SPP1 holin family.

The protein localises to the cell membrane. In terms of biological role, may be involved in the secretion of the autolysin BlyA. In Bacillus subtilis (strain 168), this protein is SPbeta prophage-derived protein BhlB (bhlB).